The chain runs to 255 residues: Acetylglutamate kinase (255 aa).

Residues 40 to 41 (GG), Arg62, and Asn153 each bind substrate.

This sequence belongs to the acetylglutamate kinase family. ArgB subfamily.

Its subcellular location is the cytoplasm. The catalysed reaction is N-acetyl-L-glutamate + ATP = N-acetyl-L-glutamyl 5-phosphate + ADP. It functions in the pathway amino-acid biosynthesis; L-arginine biosynthesis; N(2)-acetyl-L-ornithine from L-glutamate: step 2/4. Catalyzes the ATP-dependent phosphorylation of N-acetyl-L-glutamate. The protein is Acetylglutamate kinase of Bacillus cereus (strain ATCC 14579 / DSM 31 / CCUG 7414 / JCM 2152 / NBRC 15305 / NCIMB 9373 / NCTC 2599 / NRRL B-3711).